The sequence spans 504 residues: Cytochrome P450 3A2 (504 aa).

A heme-binding site is contributed by Cys443.

This sequence belongs to the cytochrome P450 family. Heme is required as a cofactor. As to expression, expressed in liver.

Its subcellular location is the endoplasmic reticulum membrane. The protein localises to the microsome membrane. It carries out the reaction an organic molecule + reduced [NADPH--hemoprotein reductase] + O2 = an alcohol + oxidized [NADPH--hemoprotein reductase] + H2O + H(+). Functionally, cytochromes P450 are a group of heme-thiolate monooxygenases. In liver microsomes, this enzyme is involved in an NADPH-dependent electron transport pathway. It oxidizes a variety of structurally unrelated compounds, including steroids, fatty acids, and xenobiotics. The sequence is that of Cytochrome P450 3A2 (Cyp3a2) from Rattus norvegicus (Rat).